The primary structure comprises 956 residues: UvrABC system protein A (956 aa).

33–40 (GLSGSGKS) contributes to the ATP binding site. The segment at 252–279 (CPYCGFSVGELEPRMFSFNSPFGACPTC) adopts a C4-type zinc-finger fold. 2 ABC transporter domains span residues 309–587 (WRPI…KNSI) and 607–936 (GNGL…KYLK). 639–646 (GVSGSGKS) is a binding site for ATP. Residues 738 to 764 (CEACKGDGIIKIEMHFLPDVYVPCEVC) form a C4-type zinc finger.

This sequence belongs to the ABC transporter superfamily. UvrA family. In terms of assembly, forms a heterotetramer with UvrB during the search for lesions.

It is found in the cytoplasm. The UvrABC repair system catalyzes the recognition and processing of DNA lesions. UvrA is an ATPase and a DNA-binding protein. A damage recognition complex composed of 2 UvrA and 2 UvrB subunits scans DNA for abnormalities. When the presence of a lesion has been verified by UvrB, the UvrA molecules dissociate. The protein is UvrABC system protein A of Listeria monocytogenes serotype 4b (strain F2365).